A 208-amino-acid polypeptide reads, in one-letter code: AN1-type zinc finger protein 6 (208 aa).

Residues 8-42 form an A20-type zinc finger; it reads SQVPMLCSTGCGFYGNPRTNGMCSVCYKEHLQRQN. 4 residues coordinate Zn(2+): C14, C18, C30, and C33. The segment at 41–110 is disordered; sequence QNSSNGRISP…ASSQVDSTSV (70 aa). A Phosphoserine modification is found at S49. Residues 54-68 are compositionally biased toward polar residues; sequence SVTSLSESLPVQCTD. Low complexity predominate over residues 83–94; sequence SSVQPSPVSNQS. Polar residues predominate over residues 95-110; it reads LLSESVASSQVDSTSV. The segment at 143-189 adopts an AN1-type zinc-finger fold; that stretch reads KQKKNRCFMCRKKVGLTGFECRCGNVYCGVHRYSDVHNCSYNYKADA. Zn(2+) is bound by residues C149, C152, C163, C165, C170, H173, H179, and C181. K204 carries the N6-acetyllysine modification.

As to quaternary structure, interacts with PKN1.

The chain is AN1-type zinc finger protein 6 (ZFAND6) from Bos taurus (Bovine).